Here is a 279-residue protein sequence, read N- to C-terminus: NADPH-dependent 7-cyano-7-deazaguanine reductase (279 aa).

Substrate is bound at residue isoleucine 86–serine 88. Serine 88 to lysine 89 is a binding site for NADPH. The active-site Thioimide intermediate is cysteine 187. Aspartate 194 serves as the catalytic Proton donor. Histidine 226–glutamate 227 contributes to the substrate binding site. Arginine 255–glycine 256 lines the NADPH pocket.

It belongs to the GTP cyclohydrolase I family. QueF type 2 subfamily. As to quaternary structure, homodimer.

It localises to the cytoplasm. The enzyme catalyses 7-aminomethyl-7-carbaguanine + 2 NADP(+) = 7-cyano-7-deazaguanine + 2 NADPH + 3 H(+). The protein operates within tRNA modification; tRNA-queuosine biosynthesis. Catalyzes the NADPH-dependent reduction of 7-cyano-7-deazaguanine (preQ0) to 7-aminomethyl-7-deazaguanine (preQ1). The chain is NADPH-dependent 7-cyano-7-deazaguanine reductase from Actinobacillus pleuropneumoniae serotype 7 (strain AP76).